The following is a 229-amino-acid chain: Capsid protein (229 aa).

Position 1 is an N-acetylmethionine; by host (methionine 1). A compositionally biased stretch (gly residues) spans 1–10 (MAQNGTGGGS). Residues 1–28 (MAQNGTGGGSRRPRRGRRNNNNNNSTAR) are disordered. A disulfide bridge connects residues cysteine 64 and cysteine 106.

It belongs to the cucumovirus capsid protein family.

The protein resides in the virion. Its function is as follows. Capsid protein. Probably binds RNA and plays a role in packaging. The protein is Capsid protein of Canna (Florist's daisy).